A 585-amino-acid chain; its full sequence is Cytochrome c lysine N-methyltransferase 1 (585 aa).

Positions 18 to 273 constitute an SET domain; it reads KSLSLKPSTI…KPIEVFISYS (256 aa). An SET-like region spans residues 186 to 288; the sequence is LNLSDIKHLY…FSMLVTYGFT (103 aa).

It belongs to the class V-like SAM-binding methyltransferase superfamily.

Its subcellular location is the cytoplasm. It localises to the cytosol. It catalyses the reaction L-lysyl-[cytochrome c] + S-adenosyl-L-methionine = N(6)-methyl-L-lysyl-[cytochrome c] + S-adenosyl-L-homocysteine + H(+). Functionally, methyltransferase which mediates trimethylation of 'Lys-78' of cytochrome c (CYC1). The polypeptide is Cytochrome c lysine N-methyltransferase 1 (CTM1) (Saccharomyces cerevisiae (strain ATCC 204508 / S288c) (Baker's yeast)).